A 153-amino-acid polypeptide reads, in one-letter code: D-amino acid oxidase regulator (153 aa).

The tract at residues 1-25 (MLEKLMGADSLQLFRSRYTLGKIYF) is involved in targeting to the mitochondrion. The interaction with DAO stretch occupies residues 138-153 (KDQSCNHKEITSTKAE).

Interacts with DAO (D-amino acid oxidase); the interaction is direct, can occur in the presence or absence of FAD or substrate bound to DAO, and results in a complex containing two DAO homodimers and two DAOA monomers. Interacts with DDO (D-aspartate oxidase); the interaction is direct. Interacts wih SOD1; the interaction is direct. Interacts with MSRB2; the interaction is direct. Expressed in the amygdala and in astrocytes of the cortex (at protein level). Expressed in the caudate nucleus, spinal cord and testis.

It is found in the cytoplasm. Its subcellular location is the cytosol. It localises to the golgi apparatus. The protein resides in the mitochondrion. Its function is as follows. May suppress DAO (D-amino acid oxidase) and SOD1 activity and promote their degradation. Has conversely also been suggested to function as a DAO activator. May stimulate the degradation of DDO (D-aspartate oxidase). May play a role in mitochondrial fission. The sequence is that of D-amino acid oxidase regulator (DAOA) from Homo sapiens (Human).